Here is a 302-residue protein sequence, read N- to C-terminus: Dioxygenase ALT11 (302 aa).

The disordered stretch occupies residues 1-22; it reads MSSPELPSQMGVPNGHTKLQEV. Fe cation-binding residues include His147, Asp149, and His223.

This sequence belongs to the PhyH family. In terms of assembly, homodimer. Requires Fe cation as cofactor.

The protein operates within mycotoxin biosynthesis. Dioxygenase; part of the gene cluster that mediates the biosynthesis of the host-selective toxins (HSTs) AAL-toxins, sphinganine-analog mycotoxins responsible for Alternaria stem canker on tomato by the tomato pathotype. The biosynthesis starts with the polyketide synthase ALT1-catalyzed C-16 carbon chain assembly from one starter acetyl-CoA unit with malonyl-CoA extender units. ALT1 also selectively transfers methyl groups at the first and the third cycle of chain elongation for AAL toxin. The C-16 polyketide chain is released from the enzyme by a nucleophilic attack of a carbanion, which is derived from R-carbon of glycin by decarboxylation, on the carbonyl carbon of polyketide acyl chain. This step is probably catalyzed by a pyridoxal 5'-phosphate-dependent aminoacyl transferase ALT4. The respective functions of the other enzymes encoded by the cluster have still to be elucidated. The sphingosine N-acyltransferase-like protein ALT7 seems not to act as a resistance/self-tolerance factor against the toxin in the toxin biosynthetic gene cluster, contrary to what is expected. This is Dioxygenase ALT11 from Alternaria alternata (Alternaria rot fungus).